Here is a 454-residue protein sequence, read N- to C-terminus: Phosphoglucosamine mutase (454 aa).

Ser101 acts as the Phosphoserine intermediate in catalysis. Mg(2+) contacts are provided by Ser101, Asp243, Asp245, and Asp247. Residue Ser101 is modified to Phosphoserine.

It belongs to the phosphohexose mutase family. The cofactor is Mg(2+). In terms of processing, activated by phosphorylation.

The enzyme catalyses alpha-D-glucosamine 1-phosphate = D-glucosamine 6-phosphate. Catalyzes the conversion of glucosamine-6-phosphate to glucosamine-1-phosphate. The protein is Phosphoglucosamine mutase of Geotalea uraniireducens (strain Rf4) (Geobacter uraniireducens).